The chain runs to 339 residues: Transmembrane protein 120B (339 aa).

Positions 1 to 67 form a coiled coil; it reads MSGQLERCER…KHTLQRYKRH (67 aa). Transmembrane regions (helical) follow at residues 102-124, 132-152, 159-179, 187-207, 270-290, and 302-322; these read GLYL…AKFA, FKLY…FVLH, VFNF…SILI, GWWV…LTWP, FLLP…VTLF, and QVFV…LTTL.

The protein belongs to the TMEM120 family. As to quaternary structure, heterooligomer with TMEM120A. Expressed in inguinal and subcutaneous white adipose tissue and in brown adipose tissue.

The protein localises to the nucleus inner membrane. Functionally, necessary for efficient adipogenesis. Does not show ion channel activity. This Mus musculus (Mouse) protein is Transmembrane protein 120B.